Reading from the N-terminus, the 238-residue chain is Uridylate kinase (238 aa).

Lys12–Gly15 lines the ATP pocket. UMP is bound at residue Gly54. ATP contacts are provided by Gly55 and Arg59. UMP contacts are provided by residues Asp74 and Thr135–Thr142. ATP contacts are provided by Thr162, Tyr168, and Asp171.

It belongs to the UMP kinase family. In terms of assembly, homohexamer.

It localises to the cytoplasm. The catalysed reaction is UMP + ATP = UDP + ADP. It functions in the pathway pyrimidine metabolism; CTP biosynthesis via de novo pathway; UDP from UMP (UMPK route): step 1/1. Its activity is regulated as follows. Inhibited by UTP. Functionally, catalyzes the reversible phosphorylation of UMP to UDP. The polypeptide is Uridylate kinase (Bordetella bronchiseptica (strain ATCC BAA-588 / NCTC 13252 / RB50) (Alcaligenes bronchisepticus)).